Reading from the N-terminus, the 125-residue chain is Fluoride-specific ion channel FluC (125 aa).

A run of 4 helical transmembrane segments spans residues Val-4–Val-24, Phe-32–Ala-52, Leu-68–Val-88, and Ala-100–Val-120. The Na(+) site is built by Gly-75 and Thr-78.

Belongs to the fluoride channel Fluc/FEX (TC 1.A.43) family.

It is found in the cell inner membrane. It carries out the reaction fluoride(in) = fluoride(out). With respect to regulation, na(+) is not transported, but it plays an essential structural role and its presence is essential for fluoride channel function. Its function is as follows. Fluoride-specific ion channel. Important for reducing fluoride concentration in the cell, thus reducing its toxicity. The chain is Fluoride-specific ion channel FluC from Allorhizobium ampelinum (strain ATCC BAA-846 / DSM 112012 / S4) (Agrobacterium vitis (strain S4)).